We begin with the raw amino-acid sequence, 315 residues long: Prephenate dehydratase (315 aa).

The region spanning 3 to 190 (RIAYLGPQGT…ARTRFVLVGR (188 aa)) is the Prephenate dehydratase domain. Residues 204–281 (SVALRLPNTP…EDVRYLGSWP (78 aa)) enclose the ACT domain.

In terms of assembly, homodimer.

It catalyses the reaction prephenate + H(+) = 3-phenylpyruvate + CO2 + H2O. It functions in the pathway amino-acid biosynthesis; L-phenylalanine biosynthesis; phenylpyruvate from prephenate: step 1/1. The sequence is that of Prephenate dehydratase (pheA) from Mycobacterium sp. (strain JLS).